We begin with the raw amino-acid sequence, 249 residues long: Transmembrane protein 150C (249 aa).

The Cytoplasmic segment spans residues 1 to 9 (MDGKKCSVW). A helical membrane pass occupies residues 10–30 (MFLPLVFTLFTSAGLWIVYFI). Residues 31–64 (AVEDDKILPLNSAERKPGVKHAPYISIAGDDPPA) lie on the Extracellular side of the membrane. The chain crosses the membrane as a helical span at residues 65-85 (SCVFSQVMNMAAFLALVVAVL). Over 86–97 (RFIQLKPKVLNP) the chain is Cytoplasmic. A helical membrane pass occupies residues 98–118 (WLNISGLVALCLASFGMTLLG). At 119 to 130 (NFQLTNDEEIHN) the chain is on the extracellular side. A helical transmembrane segment spans residues 131-151 (VGTSLTFGFGTLTCWIQAALT). The Cytoplasmic portion of the chain corresponds to 152–168 (LKVNIKNEGRRVGIPRV). Residues 169 to 189 (ILSASITLCVVLYFILMAQSI) traverse the membrane as a helical segment. Residues 190-192 (HMY) are Extracellular-facing. A helical membrane pass occupies residues 193-213 (AARVQWGLVMCFLSYFGTFAV). At 214 to 249 (EFRHYRYEIVCSEYQENFLSFSESLSEASEYQTDQV) the chain is on the cytoplasmic side.

The protein belongs to the DRAM/TMEM150 family.

It is found in the cell membrane. The protein localises to the lysosome membrane. It carries out the reaction Ca(2+)(in) = Ca(2+)(out). It catalyses the reaction Na(+)(in) = Na(+)(out). The catalysed reaction is K(+)(in) = K(+)(out). The enzyme catalyses Mg(2+)(in) = Mg(2+)(out). Its function is as follows. Nonselective cationic channel with high permeability to Ca(2+). Component of a mechanosensitive cation channel, confers mechanically activated (MA) currents with slow inactivation kinetics. May contribute to proprioception. The sequence is that of Transmembrane protein 150C from Homo sapiens (Human).